A 156-amino-acid polypeptide reads, in one-letter code: MSINATLFVQAIVFLILVLFTMKFVWPPIAKALDERAQKIAEGLAAADRAKSELVAVNQRVETELAQTRNETASRLADAERRAQAIIEEAKARATEEGNKIVAAARAEAEQQTIQAREALREQVAALAVKGAEQILRKEVNAGVHADLLNRLKTEL.

The helical transmembrane segment at 7–27 threads the bilayer; that stretch reads LFVQAIVFLILVLFTMKFVWP.

It belongs to the ATPase B chain family. As to quaternary structure, F-type ATPases have 2 components, F(1) - the catalytic core - and F(0) - the membrane proton channel. F(1) has five subunits: alpha(3), beta(3), gamma(1), delta(1), epsilon(1). F(0) has three main subunits: a(1), b(2) and c(10-14). The alpha and beta chains form an alternating ring which encloses part of the gamma chain. F(1) is attached to F(0) by a central stalk formed by the gamma and epsilon chains, while a peripheral stalk is formed by the delta and b chains.

It is found in the cell inner membrane. F(1)F(0) ATP synthase produces ATP from ADP in the presence of a proton or sodium gradient. F-type ATPases consist of two structural domains, F(1) containing the extramembraneous catalytic core and F(0) containing the membrane proton channel, linked together by a central stalk and a peripheral stalk. During catalysis, ATP synthesis in the catalytic domain of F(1) is coupled via a rotary mechanism of the central stalk subunits to proton translocation. Its function is as follows. Component of the F(0) channel, it forms part of the peripheral stalk, linking F(1) to F(0). The sequence is that of ATP synthase subunit b from Paracidovorax citrulli (strain AAC00-1) (Acidovorax citrulli).